The sequence spans 79 residues: Sec-independent protein translocase protein TatA (79 aa).

Residues 1–21 (MGGISIWQLLIVALIVVLLFG) traverse the membrane as a helical segment. The interval 43–79 (MSSEEDKKALEDTEAAKTAQTTQQATEKKPESNKEQA) is disordered. The segment covering 46 to 57 (EEDKKALEDTEA) has biased composition (basic and acidic residues). A compositionally biased stretch (low complexity) spans 58-67 (AKTAQTTQQA). Positions 68–79 (TEKKPESNKEQA) are enriched in basic and acidic residues.

This sequence belongs to the TatA/E family. The Tat system comprises two distinct complexes: a TatABC complex, containing multiple copies of TatA, TatB and TatC subunits, and a separate TatA complex, containing only TatA subunits. Substrates initially bind to the TatABC complex, which probably triggers association of the separate TatA complex to form the active translocon.

It is found in the cell inner membrane. Its function is as follows. Part of the twin-arginine translocation (Tat) system that transports large folded proteins containing a characteristic twin-arginine motif in their signal peptide across membranes. TatA could form the protein-conducting channel of the Tat system. The protein is Sec-independent protein translocase protein TatA of Shewanella baltica (strain OS223).